Here is a 192-residue protein sequence, read N- to C-terminus: MKTFQLTGTPRAEFGKKAAKAIRKEDQIPAVLYGGKGEGVNFIVSQDAVRNLIYSPEIFLVELTVEGSGSYKAILKEIQFHPVTDRIIHIDFLQVTDEKPVVMEVPVVLTGHAEGVKAGGKLSLEMRKLKVKALYSEIPEKLDIDVSDLQLGKTIQVGELHFEGLTLMNAKNAVVCAVKLTRAARGAAVKKQ.

This sequence belongs to the bacterial ribosomal protein bL25 family. CTC subfamily. In terms of assembly, part of the 50S ribosomal subunit; part of the 5S rRNA/L5/L18/L25 subcomplex. Contacts the 5S rRNA. Binds to the 5S rRNA independently of L5 and L18.

In terms of biological role, this is one of the proteins that binds to the 5S RNA in the ribosome where it forms part of the central protuberance. The sequence is that of Large ribosomal subunit protein bL25 from Porphyromonas gingivalis (strain ATCC 33277 / DSM 20709 / CIP 103683 / JCM 12257 / NCTC 11834 / 2561).